Reading from the N-terminus, the 1028-residue chain is Contactin-3 (1028 aa).

The N-terminal stretch at 1 to 19 is a signal peptide; it reads MMLSWKQLILLSFIGCLAG. Ig-like C2-type domains follow at residues 26–117, 122–208, 227–313, 318–402, 408–497, and 499–593; these read PVFV…AKLQ, ENFK…ARVL, PKIE…GRLT, PYWV…AELK, PDFS…LVVT, and PTRI…AELI. 5 disulfide bridges follow: Cys-50/Cys-100, Cys-144/Cys-196, Cys-249/Cys-297, Cys-339/Cys-386, and Cys-431/Cys-479. N-linked (GlcNAc...) asparagine glycosylation is found at Asn-65 and Asn-193. Residues Asn-377, Asn-468, Asn-489, and Asn-538 are each glycosylated (N-linked (GlcNAc...) asparagine). A disulfide bond links Cys-521 and Cys-577. Fibronectin type-III domains lie at 600–698, 703–800, 805–901, and 902–998; these read PPEN…TEEA, APSE…SAEE, APSH…TKKT, and PPSQ…TSMD. Residues 684-714 form a disordered region; it reads GEPSLPSEKVRTEEAAPEVAPSEVSGGGGSR. Asn-765, Asn-860, Asn-895, Asn-913, Asn-931, and Asn-956 each carry an N-linked (GlcNAc...) asparagine glycan. The GPI-anchor amidated serine moiety is linked to residue Ser-1002. A propeptide spans 1003–1028 (removed in mature form); that stretch reads TSAISDIHPVSGYISVLLFFIVNALW.

Belongs to the immunoglobulin superfamily. Contactin family. Interacts with PTPRG. As to expression, specifically expressed in brain. Not expressed in peripheral tissues such as heart, lung, liver, spleen, kidney and skeletal muscle. In brain, it is restricted to subsets of neurons such as Purkinje cells of the cerebellum, granule cells of the dentate gyrus, and neurons in the superficial layers of the cerebral cortex.

The protein localises to the cell membrane. Its function is as follows. Contactins mediate cell surface interactions during nervous system development. Has some neurite outgrowth-promoting activity. This is Contactin-3 (Cntn3) from Rattus norvegicus (Rat).